Here is a 551-residue protein sequence, read N- to C-terminus: uncharacterized protein (551 aa).

The N-terminal 36 residues, 1–36 (MMALVRDRRAHYVMSIVIRWVHCFSSSLRGTFGTRW), are a transit peptide targeting the mitochondrion. Residues 203-315 (TNILLRKLKE…MDSRDRLREE (113 aa)) are a coiled coil. Residues 354–389 (REASLSPWPKSPPSTTALRPHSATMSVSSAGAQKAK) are disordered. A compositionally biased stretch (polar residues) spans 366-384 (PSTTALRPHSATMSVSSAG). Positions 405-439 (KHGLESQIEALKANLENEKKKVERFRKEADRLNKS) form a coiled coil. Residues 519 to 551 (LQLSPKGKLSESPKEESLEEPSMRQSSPAETVD) are disordered. Residues 541-551 (MRQSSPAETVD) show a composition bias toward polar residues.

In terms of assembly, interacts with NOD2.

The protein localises to the mitochondrion. This is an uncharacterized protein from Homo sapiens (Human).